A 705-amino-acid chain; its full sequence is 3-hydroxypropionate--CoA ligase [ADP-forming] (705 aa).

Positions 25-61 constitute an ATP-grasp domain; that stretch reads KSILKNYGVKVPPYALVTSAEEAAKEAKKIGFPLVMK. 51–61 contributes to the ATP binding site; the sequence is AKKIGFPLVMK.

It in the N-terminal section; belongs to the acetate CoA ligase beta subunit family. In the C-terminal section; belongs to the acetate CoA ligase alpha subunit family. Mg(2+) is required as a cofactor. Requires Mn(2+) as cofactor.

It catalyses the reaction 3-hydroxypropanoate + ATP + CoA = 3-hydroxypropanoyl-CoA + ADP + phosphate. Its function is as follows. Involved in thaumarchaeal hydroxypropionate/hydroxybutyrate (HP/HB) cycle, a modified version of the autotrophic HP/HB cycle of Crenarchaeota. Catalyzes the formation of 3-hydroxypropionyl-CoA, ADP and phosphate from 3-hydroxypropionate, coenzyme A (CoA) and ATP. Can also use 4-hydroxybutyrate, propionate and butyrate, with poor catalytic efficiency. The chain is 3-hydroxypropionate--CoA ligase [ADP-forming] from Nitrosopumilus maritimus (strain SCM1).